Consider the following 81-residue polypeptide: Photosystem I iron-sulfur center (81 aa).

4Fe-4S ferredoxin-type domains are found at residues 2 to 31 (SHAV…MVPW) and 37 to 68 (GQIA…IRVY). [4Fe-4S] cluster-binding residues include cysteine 11, cysteine 14, cysteine 17, cysteine 21, cysteine 48, cysteine 51, cysteine 54, and cysteine 58.

As to quaternary structure, the cyanobacterial PSI reaction center is composed of one copy each of PsaA,B,C,D,E,F,I,J,K,L,M and X, and forms trimeric complexes. The cofactor is [4Fe-4S] cluster.

The protein localises to the cellular thylakoid membrane. The catalysed reaction is reduced [plastocyanin] + hnu + oxidized [2Fe-2S]-[ferredoxin] = oxidized [plastocyanin] + reduced [2Fe-2S]-[ferredoxin]. Apoprotein for the two 4Fe-4S centers FA and FB of photosystem I (PSI); essential for photochemical activity. FB is the terminal electron acceptor of PSI, donating electrons to ferredoxin. The C-terminus interacts with PsaA/B/D and helps assemble the protein into the PSI complex. Required for binding of PsaD and PsaE to PSI. PSI is a plastocyanin/cytochrome c6-ferredoxin oxidoreductase, converting photonic excitation into a charge separation, which transfers an electron from the donor P700 chlorophyll pair to the spectroscopically characterized acceptors A0, A1, FX, FA and FB in turn. This Prochlorococcus marinus subsp. pastoris (strain CCMP1986 / NIES-2087 / MED4) protein is Photosystem I iron-sulfur center.